The chain runs to 29 residues: LENRVAEKQKLFQEDNGLPVHLKGGATDN.

Basic and acidic residues predominate over residues 1-13; sequence LENRVAEKQKLFQ. The segment at 1-29 is disordered; that stretch reads LENRVAEKQKLFQEDNGLPVHLKGGATDN.

It belongs to the cytochrome c oxidase VIIa family. As to quaternary structure, component of the complex IV (CIV, cytochrome c oxidase), a multisubunit enzyme composed of 14 subunits. The complex is composed of a catalytic core of 3 subunits MT-CO1, MT-CO2 and MT-CO3, encoded in the mitochondrial DNA, and 11 supernumerary subunits COX4I1 (or COX4I2), COX5A, COX5B, COX6A2 (or COX6A1), COX6B1 (or COX6B2), COX6C, COX7A1 (or COX7A2), COX7B, COX7C, COX8B and NDUFA4, which are encoded in the nuclear genome. The complex exists as a monomer or a dimer and forms supercomplexes (SCs) in the inner mitochondrial membrane with NADH-ubiquinone oxidoreductase (complex I, CI) and ubiquinol-cytochrome c oxidoreductase (cytochrome b-c1 complex, complex III, CIII), resulting in different assemblies (supercomplex SCI(1)III(2)IV(1) and megacomplex MCI(2)III(2)IV(2)).

The protein localises to the mitochondrion inner membrane. The protein operates within energy metabolism; oxidative phosphorylation. Functionally, component of the mitochondrial respiratory complex IV (CIV, also named cytochrome c oxidase complex), the last enzyme in the mitochondrial electron transport chain which drives oxidative phosphorylation. The CIV complex is the component of the respiratory chain that catalyzes the reduction of oxygen to water. Acts as an assembly factor that specifically drives the homodimerization of CIV complexes, mediating the formation of mitochondrial respiratory supercomplexes (respirasomes) containing two CIV: supercomplxes with two molecules of CIV show improved activity. Despite being highly expressed in brown adipose tissue, not required for thermogenesis. The protein is Cytochrome c oxidase subunit 7A1, mitochondrial (COX7A1) of Ovis aries (Sheep).